We begin with the raw amino-acid sequence, 431 residues long: Serine--tRNA ligase (431 aa).

237–239 (TAE) is a binding site for L-serine. Residue 268–270 (RSE) participates in ATP binding. Glutamate 291 contributes to the L-serine binding site. 355-358 (EISS) lines the ATP pocket. Position 390 (serine 390) interacts with L-serine.

It belongs to the class-II aminoacyl-tRNA synthetase family. Type-1 seryl-tRNA synthetase subfamily. Homodimer. The tRNA molecule binds across the dimer.

It is found in the cytoplasm. It catalyses the reaction tRNA(Ser) + L-serine + ATP = L-seryl-tRNA(Ser) + AMP + diphosphate + H(+). It carries out the reaction tRNA(Sec) + L-serine + ATP = L-seryl-tRNA(Sec) + AMP + diphosphate + H(+). Its pathway is aminoacyl-tRNA biosynthesis; selenocysteinyl-tRNA(Sec) biosynthesis; L-seryl-tRNA(Sec) from L-serine and tRNA(Sec): step 1/1. Functionally, catalyzes the attachment of serine to tRNA(Ser). Is also able to aminoacylate tRNA(Sec) with serine, to form the misacylated tRNA L-seryl-tRNA(Sec), which will be further converted into selenocysteinyl-tRNA(Sec). This is Serine--tRNA ligase from Neisseria meningitidis serogroup A / serotype 4A (strain DSM 15465 / Z2491).